A 311-amino-acid chain; its full sequence is MSQNQDISKKEQYNLNKLQKRLRRNVGEAIADFNMIEEGDRIMVCLSGGKDSYTMLEILRNLQQSAPVNFSLVAVNLDQKQPGFPEHILPEYLENLGVEYKIVEENTYGIVKEKIPEGKTTCSLCSRLRRGILYRTATELGATKIALGHHRDDILQTLFLNMFYGGKMKGMPPKLMSDDGKHIVIRPLAYCREKDIERFSEAKAFPIIPCNLCGSQPNLQRQVIADMLRDWDKRYPGRIETMFSAMQNVVPSHLSDINLFDFKGINHDSDVVDGGDLAFDREEIPLQPAGWQPEEDDNQLDELRLNVVEVK.

A PP-loop motif motif is present at residues 47 to 52 (SGGKDS). [4Fe-4S] cluster is bound by residues Cys-122, Cys-125, and Cys-213.

This sequence belongs to the TtcA family. As to quaternary structure, homodimer. It depends on Mg(2+) as a cofactor. Requires [4Fe-4S] cluster as cofactor.

Its subcellular location is the cytoplasm. The catalysed reaction is cytidine(32) in tRNA + S-sulfanyl-L-cysteinyl-[cysteine desulfurase] + AH2 + ATP = 2-thiocytidine(32) in tRNA + L-cysteinyl-[cysteine desulfurase] + A + AMP + diphosphate + H(+). It functions in the pathway tRNA modification. In terms of biological role, catalyzes the ATP-dependent 2-thiolation of cytidine in position 32 of tRNA, to form 2-thiocytidine (s(2)C32). The sulfur atoms are provided by the cysteine/cysteine desulfurase (IscS) system. This chain is tRNA-cytidine(32) 2-sulfurtransferase, found in Citrobacter koseri (strain ATCC BAA-895 / CDC 4225-83 / SGSC4696).